The primary structure comprises 230 residues: Large ribosomal subunit protein uL1 (230 aa).

It belongs to the universal ribosomal protein uL1 family. Part of the 50S ribosomal subunit.

Its function is as follows. Binds directly to 23S rRNA. The L1 stalk is quite mobile in the ribosome, and is involved in E site tRNA release. Protein L1 is also a translational repressor protein, it controls the translation of the L11 operon by binding to its mRNA. The sequence is that of Large ribosomal subunit protein uL1 from Granulibacter bethesdensis (strain ATCC BAA-1260 / CGDNIH1).